The chain runs to 552 residues: Two-component response regulator ARR10 (552 aa).

The Response regulatory domain occupies 18–133 (RVLAVDDDQT…ELKNIWQHVV (116 aa)). At aspartate 69 the chain carries 4-aspartylphosphate. Residues 139-181 (KKNKSNVSNGSGNCDKANRKRKEQYEEEEEEERGNDNDDPTAQ) are disordered. A coiled-coil region spans residues 151–173 (NCDKANRKRKEQYEEEEEEERGN). Residues 163-177 (YEEEEEEERGNDNDD) are compositionally biased toward acidic residues. Positions 182-185 (KKPR) match the Nuclear localization signal motif. The segment at residues 185–235 (RVLWTHELHNKFLAAVDHLGVERAVPKKILDLMNVDKLTRENVASHLQKFR) is a DNA-binding region (myb-like GARP).

This sequence belongs to the ARR family. Type-B subfamily. Binds the target DNA as a monomer. Post-translationally, two-component system major event consists of a His-to-Asp phosphorelay between a sensor histidine kinase (HK) and a response regulator (RR). In plants, the His-to-Asp phosphorelay involves an additional intermediate named Histidine-containing phosphotransfer protein (HPt). This multistep phosphorelay consists of a His-Asp-His-Asp sequential transfer of a phosphate group between first a His and an Asp of the HK protein, followed by the transfer to a conserved His of the HPt protein and finally the transfer to an Asp in the receiver domain of the RR protein. In terms of tissue distribution, detected in the whole plant. Predominantly expressed in roots and leaves.

It localises to the nucleus. Functionally, transcriptional activator that binds specifically to the DNA sequence 5'-[AG]GATT-3'. Functions as a response regulator involved in His-to-Asp phosphorelay signal transduction system. Phosphorylation of the Asp residue in the receiver domain activates the ability of the protein to promote the transcription of target genes. Could directly activate some type-A response regulators in response to cytokinins. The polypeptide is Two-component response regulator ARR10 (ARR10) (Arabidopsis thaliana (Mouse-ear cress)).